The chain runs to 180 residues: ATP-dependent protease subunit HslV (180 aa).

Threonine 7 is a catalytic residue. Residues glycine 165, cysteine 168, and threonine 171 each contribute to the Na(+) site.

The protein belongs to the peptidase T1B family. HslV subfamily. A double ring-shaped homohexamer of HslV is capped on each side by a ring-shaped HslU homohexamer. The assembly of the HslU/HslV complex is dependent on binding of ATP.

Its subcellular location is the cytoplasm. The catalysed reaction is ATP-dependent cleavage of peptide bonds with broad specificity.. Allosterically activated by HslU binding. Protease subunit of a proteasome-like degradation complex believed to be a general protein degrading machinery. The polypeptide is ATP-dependent protease subunit HslV (Bacillus cytotoxicus (strain DSM 22905 / CIP 110041 / 391-98 / NVH 391-98)).